Reading from the N-terminus, the 218-residue chain is Large ribosomal subunit protein uL3 (218 aa).

Residues 126 to 163 are disordered; it reads HGFSRGPMTHGSKNHRQPGSIGAGTTPGRIYPGKRMSG.

This sequence belongs to the universal ribosomal protein uL3 family. Part of the 50S ribosomal subunit. Forms a cluster with proteins L14 and L19.

One of the primary rRNA binding proteins, it binds directly near the 3'-end of the 23S rRNA, where it nucleates assembly of the 50S subunit. The polypeptide is Large ribosomal subunit protein uL3 (Synechococcus sp. (strain CC9311)).